The following is a 180-amino-acid chain: Translation initiation factor IF-3 (180 aa).

It belongs to the IF-3 family. As to quaternary structure, monomer.

The protein localises to the cytoplasm. IF-3 binds to the 30S ribosomal subunit and shifts the equilibrium between 70S ribosomes and their 50S and 30S subunits in favor of the free subunits, thus enhancing the availability of 30S subunits on which protein synthesis initiation begins. The polypeptide is Translation initiation factor IF-3 (Hyphomonas neptunium (strain ATCC 15444)).